We begin with the raw amino-acid sequence, 287 residues long: Nucleotide-binding protein Sfri_3380 (287 aa).

8–15 provides a ligand contact to ATP; the sequence is GRSGSGKS. 56–59 contributes to the GTP binding site; sequence DVRN.

It belongs to the RapZ-like family.

In terms of biological role, displays ATPase and GTPase activities. This Shewanella frigidimarina (strain NCIMB 400) protein is Nucleotide-binding protein Sfri_3380.